The chain runs to 133 residues: Small ribosomal subunit protein uS19 (133 aa).

This sequence belongs to the universal ribosomal protein uS19 family.

Its function is as follows. Protein S19 forms a complex with S13 that binds strongly to the 16S ribosomal RNA. This is Small ribosomal subunit protein uS19 from Thermococcus sibiricus (strain DSM 12597 / MM 739).